Reading from the N-terminus, the 426-residue chain is Cuticle-degrading serine protease (426 aa).

An N-terminal signal peptide occupies residues 1 to 21 (MLTNGLISLLAIAGLATNAFA). The propeptide occupies 22-123 (GPIRKVSNAG…VEQDTVVTTY (102 aa)). In terms of domain architecture, Inhibitor I9 spans 39-122 (KYIVVLKKGL…YVEQDTVVTT (84 aa)). One can recognise a Peptidase S8 domain in the interval 130–426 (TWGLDRISHE…TNHQVTIVAS (297 aa)). Asp-164 (charge relay system) is an active-site residue. Residue Asn-178 is glycosylated (N-linked (GlcNAc...) asparagine). His-200 acts as the Charge relay system in catalysis. Asn-252 is a glycosylation site (N-linked (GlcNAc...) asparagine). The Charge relay system role is filled by Ser-353.

Belongs to the peptidase S8 family.

It localises to the secreted. Its activity is regulated as follows. Inhibited by PMSF, SSI, the peptide Phe-Val and by Phe, but not by EDTA. Functionally, hydrolyzes gelatin, casein, the chromogenic substrate azocoll and the cuticle of the nematode P.redivivus. Immobilizes P.redivivus. The polypeptide is Cuticle-degrading serine protease (Orbilia oligospora (Nematode-trapping fungus)).